The sequence spans 519 residues: Cytochrome P450 52-E3 (519 aa).

Residues 10 to 30 (VLGGISVSFLLAYQAIYFYFI) form a helical membrane-spanning segment. Cysteine 461 serves as a coordination point for heme.

It belongs to the cytochrome P450 family. It depends on heme as a cofactor.

Its subcellular location is the membrane. The catalysed reaction is an omega-methyl-long-chain fatty acid + reduced [NADPH--hemoprotein reductase] + O2 = an omega-hydroxy-long-chain fatty acid + oxidized [NADPH--hemoprotein reductase] + H2O + H(+). The enzyme catalyses (9Z)-octadecenoate + reduced [NADPH--hemoprotein reductase] + O2 = 18-hydroxy-(9Z)-octadecenoate + oxidized [NADPH--hemoprotein reductase] + H2O + H(+). It catalyses the reaction hexadecanoate + reduced [NADPH--hemoprotein reductase] + O2 = 16-hydroxyhexadecanoate + oxidized [NADPH--hemoprotein reductase] + H2O + H(+). It carries out the reaction (9Z)-hexadecenoate + reduced [NADPH--hemoprotein reductase] + O2 = (9Z)-16-hydroxyhexadec-9-enoate + oxidized [NADPH--hemoprotein reductase] + H2O + H(+). In terms of biological role, catalyzes the terminal (at the omega-position) hydroxylation of a fatty acid. Probably involved in alkane metabolism. Has minor activity toward myristic acid, palmitic acid, palmitoleic acid and oleic acid. The polypeptide is Cytochrome P450 52-E3 (Starmerella bombicola (Yeast)).